Reading from the N-terminus, the 1277-residue chain is Membrane-associated guanylate kinase, WW and PDZ domain-containing protein 2 (1277 aa).

Residues 17-101 form the PDZ domain; sequence ESVIGRNPEG…PLRLKCVKQG (85 aa). Residues 109–283 form the Guanylate kinase-like domain; that stretch reads RHYLNLRFQK…APVYSQPEEL (175 aa). The interval 205 to 308 is disordered; it reads PGATPSAEGK…EDSDPLPDNW (104 aa). Residues 281–296 are compositionally biased toward basic and acidic residues; the sequence is EELKDQMDDTKSTKPE. WW domains are found at residues 302–335 and 348–381; these read DPLPDNWEMAYTEKGEVYFIDHNTKTTSWLDPRL and NELPYGWEKIDDPIYGTYYVDHINRRTQFENPVL. Residues 302 to 381 are interaction with DDN; sequence DPLPDNWEMA…RRTQFENPVL (80 aa). The residue at position 362 (Tyr362) is a Phosphotyrosine. The PDZ 1 domain occupies 426–510; sequence STTLKKSNMG…SVNLVLCRGY (85 aa). Residues 556-575 are disordered; the sequence is QSVPDITDRPPHSLHSMPAD. The PDZ 2 domain occupies 605 to 683; sequence TLTIVKGAKG…ETSLIIHRGG (79 aa). Ser686 bears the Phosphoserine mark. The PDZ 3 domain maps to 778–860; that stretch reads DVHLRRMESG…NGQVNLTVRR (83 aa). A Phosphotyrosine modification is found at Tyr827. The disordered stretch occupies residues 869–913; sequence CPENGRSPGSVSTHHSSPRSDYATYANSNHAAPSNNASPPEGFAS. Phosphoserine occurs at positions 884 and 885. The segment covering 894–908 has biased composition (low complexity); it reads ANSNHAAPSNNASPP. One can recognise a PDZ 4 domain in the interval 920-1010; sequence DVIIHRKENE…SVTLRIIPQE (91 aa). The span at 1011–1042 shows a compositional bias: polar residues; it reads ELNNPTSAPSSEKQSPMAQQHSPLAQQHSPLA. Residues 1011-1130 form a disordered region; it reads ELNNPTSAPS…PDTRQYPLSD (120 aa). Positions 1069–1085 are enriched in basic and acidic residues; it reads NSYRSEVKARQDVKPDI. The region spanning 1141 to 1223 is the PDZ 5 domain; that stretch reads TVDMEKGAKG…RVRLLLKRGT (83 aa).

Belongs to the MAGUK family. Interacts (via its WW domains) with DRPLA. Interacts with CTNNB1, ACVR2A, SMAD2 and SMAD3. Part of a complex consisting of MAGI2/ARIP1, ACVR2A, ACVR1B and SMAD3. May interact with HTR2A and IGSF9. Interacts with HTR4. Interacts (via guanylate kinase domain) with DLGAP1. Interacts (via PDZ domains) with GRIN2A, GRID2 and NLGN1. Interacts with CTNND2. Interacts with MAGUIN-1. Interacts (via its second PDZ domain) with PTEN (via unphosphorylated C-terminus); this interaction diminishes the degradation rate of PTEN. Found in a complex, at least composed of KIDINS220, MAGI2, NTRK1 and RAPGEF2; the complex is mainly formed at late endosomes in a NGF-dependent manner. Interacts with RAPGEF2; the interaction occurs before or after nerve growth factor (NGF) stimulation. Isoform 1 interacts (via PDZ domain) with KIDINS220 isoform 2 (via C-terminal domain). Interacts with DDN. Identified in a complex with ACTN4, CASK, IQGAP1, NPHS1, SPTAN1 and SPTBN1. Interacts with DLL1. Found in a complex with IGSF9B and NLGN2; the interaction with IGSF9B is mediated via the PDZ 5 and PDZ 6 domains, while the interaction with NLGN2 is mediated via the WW1, WW2 and PDZ2 domains. Interacts (via PDZ 6 domain) with USH1G (via SAM domain); the interaction is triggered by phosphorylation of USH1G by CK2 and negatively regulates MAGI2-mediated endocytosis. As to expression, expressed in the foot process layer of podocytes of the kidney glomeruli but not in tubules (at protein level). Expressed in the brain.

Its subcellular location is the cytoplasm. The protein localises to the late endosome. It localises to the synapse. The protein resides in the synaptosome. It is found in the cell membrane. Its subcellular location is the cytoskeleton. The protein localises to the microtubule organizing center. It localises to the centrosome. The protein resides in the cell projection. It is found in the cilium. Its subcellular location is the centriole. The protein localises to the photoreceptor inner segment. It localises to the photoreceptor outer segment. Seems to act as scaffold molecule at synaptic junctions by assembling neurotransmitter receptors and cell adhesion proteins. Plays a role in nerve growth factor (NGF)-induced recruitment of RAPGEF2 to late endosomes and neurite outgrowth. May play a role in regulating activin-mediated signaling in neuronal cells. Enhances the ability of PTEN to suppress AKT1 activation. Plays a role in receptor-mediated clathrin-dependent endocytosis which is required for ciliogenesis. This chain is Membrane-associated guanylate kinase, WW and PDZ domain-containing protein 2 (Magi2), found in Rattus norvegicus (Rat).